A 216-amino-acid chain; its full sequence is MRLSALLALASKVTLPPNYRYGMSRPGSLADKKKNPPGTRRRRVAVEPIPEEDWHLFCGDRVEILEGKDAGKQGKVVQVIRQRNWVVVEGLNTHYRYVGKTVDFRGTMVPSEAPLLHNQVKLVDPMDRKPTEVEWRFTEAGERVRVSTRSGRIIPKPDVPRADGIVPETWIDGPKDTSVEDALEKTYVPRLKTLEEEVMEAMGIQETRRHKKVYWY.

Residues Met-1–Leu-9 constitute a mitochondrion transit peptide. At Ser-24 the chain carries Phosphoserine. The KOW domain occupies Leu-56–Glu-89.

It belongs to the universal ribosomal protein uL24 family. In terms of assembly, component of the mitochondrial ribosome large subunit (39S) which comprises a 16S rRNA and about 50 distinct proteins.

The protein localises to the mitochondrion. This Bos taurus (Bovine) protein is Large ribosomal subunit protein uL24m (MRPL24).